The sequence spans 148 residues: Hemoglobin subunit beta (148 aa).

The Globin domain maps to 3–148; the sequence is XWTDXERAAI…VVSALGRQYH (146 aa). Positions 64 and 93 each coordinate heme b.

Belongs to the globin family. Heterotetramer of two alpha chains and two beta chains. Red blood cells.

Functionally, involved in oxygen transport from gills to the various peripheral tissues. This chain is Hemoglobin subunit beta (hbb), found in Decapterus maruadsi (Japanese scad).